Here is a 115-residue protein sequence, read N- to C-terminus: Regulator of ribonuclease activity B (115 aa).

This sequence belongs to the RraB family. In terms of assembly, interacts with the C-terminal region of Rne.

The protein localises to the cytoplasm. Functionally, globally modulates RNA abundance by binding to RNase E (Rne) and regulating its endonucleolytic activity. Can modulate Rne action in a substrate-dependent manner by altering the composition of the degradosome. The protein is Regulator of ribonuclease activity B of Aeromonas salmonicida (strain A449).